The chain runs to 267 residues: MENLYALILGIIEGLTEFLPISSTGHMILGTTILGIDIDEFWKSFLIIIQLGSILAVIFVFWRKLFQGLDIWLKLAVGFFPTGVIGLFVAKYLNALFNGWVVVGMLIFGGVVFILIELAHKNKQYRINSLEEISFKQAFCIGIFQSLAMIPGTSRSGASIIGGLLLGFNRKVAAEFSFLLAIPTMIIATAYSIYKEPELLSNANSLIPLGIGFITAFIVAVLVIKFFLKFISKFDFIPFGIYRIILGFVFFYLYYSGILNAGSEFKL.

The next 7 membrane-spanning stretches (helical) occupy residues 4–24 (LYAL…ISST), 41–61 (FWKS…IFVF), 69–89 (LDIW…GLFV), 96–116 (LFNG…FILI), 173–193 (AAEF…AYSI), 207–227 (IPLG…IKFF), and 239–259 (FGIY…SGIL).

The protein belongs to the UppP family.

It localises to the cell inner membrane. The enzyme catalyses di-trans,octa-cis-undecaprenyl diphosphate + H2O = di-trans,octa-cis-undecaprenyl phosphate + phosphate + H(+). Its function is as follows. Catalyzes the dephosphorylation of undecaprenyl diphosphate (UPP). Confers resistance to bacitracin. The chain is Undecaprenyl-diphosphatase from Campylobacter jejuni subsp. jejuni serotype O:23/36 (strain 81-176).